Reading from the N-terminus, the 630-residue chain is MTNIIKSFITRNTYLNKLSPSPYQFNKYYSNSISTPPTHSYEKKQQPIQNVDDKKYILTDRFNRHHTYLRISLTERCNLRCKYCMPEEGVMLSQADKILTTDEIIRLSKLFVSAGVNKIRFTGGEPLVRKDVEPLIEEVGKIKGLQKIGITTNGILLSRKLDRLHKAGVNLLNISLDTLNSDKFTLITRRLGWDRVFQSIDNALKLDNIKVKVNCVIMKGLNDMEICDFVEMTRDKSVEIRFIEYMPFDGNLWSDKKFLSYTDMIKIIHEKYPTFKKYTIEEEEPNNTSKTYHVPGFKGKVGFITSMSEHFCSSCNRLRITADGNLKVCLFGNTEVNLRDRIRDGASDQQLLEIINAAVLKKKASHAGMYEIAQNKNRPMILIGEKSKIQINFKNKSIKQKKEVKNYLLKLINSSFINSNNNNNNNNNNNNNSKLQYIQQRNYSTNKNNQNLENNEFSHITKDGKLPTMVDISDKIITKRTAHAQSILEFPSNVLSQLLNLEKNNDIDNDNNISKNKEIVSKKGPVFATSIVAGTMAVKNTSNLIPFCHPIPIESCKIEITIIDSTSVKVDCIVSMSGKTGVEMEALTGATITSLTIYDMCKALSKDIVIKETKLISKFGGKSSSPQITK.

In terms of domain architecture, Radical SAM core spans 61–298 (RFNRHHTYLR…SKTYHVPGFK (238 aa)). Arg-70 provides a ligand contact to GTP. The [4Fe-4S] cluster site is built by Cys-77 and Cys-81. Residue Tyr-83 coordinates S-adenosyl-L-methionine. Cys-84 is a binding site for [4Fe-4S] cluster. Residue Arg-120 participates in GTP binding. Gly-124 provides a ligand contact to S-adenosyl-L-methionine. Thr-151 lines the GTP pocket. Residue Ser-175 participates in S-adenosyl-L-methionine binding. Residue Lys-212 coordinates GTP. Met-246 serves as a coordination point for S-adenosyl-L-methionine. Cys-312 and Cys-315 together coordinate [4Fe-4S] cluster. 317–319 (RLR) contributes to the GTP binding site. Cys-329 contacts [4Fe-4S] cluster. The molybdenum cofactor biosynthesis protein C stretch occupies residues 402-629 (KEVKNYLLKL…GGKSSSPQIT (228 aa)). Asp-599 (for molybdenum cofactor biosynthesis protein C activity) is an active-site residue.

The protein in the C-terminal section; belongs to the MoaC family. This sequence in the N-terminal section; belongs to the radical SAM superfamily. MoaA family. Isoform mocs1a and isoform mocs1b probably form a heterooligomer. The cofactor is [4Fe-4S] cluster.

It carries out the reaction GTP + AH2 + S-adenosyl-L-methionine = (8S)-3',8-cyclo-7,8-dihydroguanosine 5'-triphosphate + 5'-deoxyadenosine + L-methionine + A + H(+). It catalyses the reaction (8S)-3',8-cyclo-7,8-dihydroguanosine 5'-triphosphate = cyclic pyranopterin phosphate + diphosphate. Its pathway is cofactor biosynthesis; molybdopterin biosynthesis. Its function is as follows. Isoform mocs1a and isoform mocs1b probably form a complex that catalyzes the conversion of 5'-GTP to cyclic pyranopterin monophosphate (cPMP). mocs1a catalyzes the cyclization of GTP to (8S)-3',8-cyclo-7,8-dihydroguanosine 5'-triphosphate and mocs1b catalyzes the subsequent conversion of (8S)-3',8-cyclo-7,8-dihydroguanosine 5'-triphosphate to cPMP. In Dictyostelium discoideum (Social amoeba), this protein is Molybdenum cofactor biosynthesis protein 1 (mocs1).